The chain runs to 473 residues: Aspartyl/glutamyl-tRNA(Asn/Gln) amidotransferase subunit B (473 aa).

The protein belongs to the GatB/GatE family. GatB subfamily. In terms of assembly, heterotrimer of A, B and C subunits.

It carries out the reaction L-glutamyl-tRNA(Gln) + L-glutamine + ATP + H2O = L-glutaminyl-tRNA(Gln) + L-glutamate + ADP + phosphate + H(+). The enzyme catalyses L-aspartyl-tRNA(Asn) + L-glutamine + ATP + H2O = L-asparaginyl-tRNA(Asn) + L-glutamate + ADP + phosphate + 2 H(+). In terms of biological role, allows the formation of correctly charged Asn-tRNA(Asn) or Gln-tRNA(Gln) through the transamidation of misacylated Asp-tRNA(Asn) or Glu-tRNA(Gln) in organisms which lack either or both of asparaginyl-tRNA or glutaminyl-tRNA synthetases. The reaction takes place in the presence of glutamine and ATP through an activated phospho-Asp-tRNA(Asn) or phospho-Glu-tRNA(Gln). This Francisella tularensis subsp. novicida (strain U112) protein is Aspartyl/glutamyl-tRNA(Asn/Gln) amidotransferase subunit B.